Reading from the N-terminus, the 325-residue chain is MSEELWVEKYRPRSLDEIVDQEEIVKRLKEFVKNKNMPHLLFAGPPGTGKTTAALALAHDLYGESWRDNTLELNASDERGIDVIRSRIKDYARTLPIGDVPFKLVILDEADNMTGDAQQALRRTMELFSRNTRFILIANYASKIIEPIQSRCAVFRFQPLPKGDAFQRLRWIAQQEGITVDDGALEAIWEESQGDLRKAINTLQAASAISRNVTEEVVYAALGRVKPKEVREMIESALKGNLLEARDKLRLLLYNYGLSGVDIIRFIHREVLSQKSVRLDDATLAELLVLVGETNYRIVEGSDDEIQLMALLSKLALVSKKAAKG.

An ATP-binding site is contributed by 44-51 (GPPGTGKT).

This sequence belongs to the activator 1 small subunits family. RfcS subfamily. In terms of assembly, heteromultimer composed of small subunits (RfcS) and large subunits (RfcL).

In terms of biological role, part of the RFC clamp loader complex which loads the PCNA sliding clamp onto DNA. This is Replication factor C small subunit from Thermofilum pendens (strain DSM 2475 / Hrk 5).